Reading from the N-terminus, the 162-residue chain is Phenazine biosynthesis protein PhzB1 (162 aa).

This sequence belongs to the PhzA/PhzB family. In terms of assembly, homodimer.

Its pathway is antibiotic biosynthesis; phenazine biosynthesis. Functionally, involved in the biosynthesis of the antibiotic phenazine, a nitrogen-containing heterocyclic molecule. PhzB1 (operon phzA1B1C1E1F1G1) has a role in the biosynthesis of the phenazine during planktonic growth. In Pseudomonas aeruginosa (strain ATCC 15692 / DSM 22644 / CIP 104116 / JCM 14847 / LMG 12228 / 1C / PRS 101 / PAO1), this protein is Phenazine biosynthesis protein PhzB1.